We begin with the raw amino-acid sequence, 101 residues long: Small ribosomal subunit protein uS10 (101 aa).

This sequence belongs to the universal ribosomal protein uS10 family. As to quaternary structure, part of the 30S ribosomal subunit.

Its function is as follows. Involved in the binding of tRNA to the ribosomes. The polypeptide is Small ribosomal subunit protein uS10 (Mycobacterium ulcerans (strain Agy99)).